The primary structure comprises 766 residues: Protein translocase subunit SecA 2 (766 aa).

ATP is bound by residues Gln84, 102 to 106 (GEGKT), and Asp490.

It belongs to the SecA family. As to quaternary structure, monomer and homodimer. Part of the essential Sec protein translocation apparatus which comprises SecA, SecYEG and auxiliary proteins SecDF. Other proteins may also be involved.

The protein resides in the cell membrane. It localises to the cytoplasm. It catalyses the reaction ATP + H2O + cellular proteinSide 1 = ADP + phosphate + cellular proteinSide 2.. Its function is as follows. Part of the Sec protein translocase complex. Interacts with the SecYEG preprotein conducting channel. Has a central role in coupling the hydrolysis of ATP to the transfer of proteins into and across the cell membrane, serving as an ATP-driven molecular motor driving the stepwise translocation of polypeptide chains across the membrane. The chain is Protein translocase subunit SecA 2 from Thermobifida fusca (strain YX).